The chain runs to 203 residues: Small ribosomal subunit protein uS4 (203 aa).

Positions 92–164 (TRLDSVVYLL…LEENRIRNVP (73 aa)) constitute an S4 RNA-binding domain.

Belongs to the universal ribosomal protein uS4 family. As to quaternary structure, part of the 30S ribosomal subunit. Contacts protein S5. The interaction surface between S4 and S5 is involved in control of translational fidelity.

In terms of biological role, one of the primary rRNA binding proteins, it binds directly to 16S rRNA where it nucleates assembly of the body of the 30S subunit. With S5 and S12 plays an important role in translational accuracy. This Opitutus terrae (strain DSM 11246 / JCM 15787 / PB90-1) protein is Small ribosomal subunit protein uS4.